We begin with the raw amino-acid sequence, 192 residues long: Adenylate kinase (192 aa).

Residue 10–15 coordinates ATP; sequence GAGKGT. An NMP region spans residues 30 to 56; sequence GTGGMLRALEPESGEQIHLRIDRGHFA. Residues Thr-31, Arg-36, 82-85, and Gln-89 each bind AMP; that span reads GFPR. The interval 123–133 is LID; that stretch reads KRGETENRADD. Residue Arg-124 participates in ATP binding. Arg-130 and Arg-141 together coordinate AMP. Residue Asp-169 coordinates ATP.

Belongs to the adenylate kinase family. Monomer.

It is found in the cytoplasm. It catalyses the reaction AMP + ATP = 2 ADP. It participates in purine metabolism; AMP biosynthesis via salvage pathway; AMP from ADP: step 1/1. In terms of biological role, catalyzes the reversible transfer of the terminal phosphate group between ATP and AMP. Plays an important role in cellular energy homeostasis and in adenine nucleotide metabolism. This chain is Adenylate kinase, found in Rhodopirellula baltica (strain DSM 10527 / NCIMB 13988 / SH1).